The primary structure comprises 728 residues: Magnetosome formation protease MamE (728 aa).

The Cytoplasmic portion of the chain corresponds to 1–21 (MAMFNGDVEDGGRGDASCGKD). The helical transmembrane segment at 22-42 (LKRYLMLMGVVALVVLFGAFI) threads the bilayer. Residues 43–728 (YRQSSGGLRL…RNGQEFWIVL (686 aa)) are Lumenal-facing. Residues His-188, Asp-221, and Ser-297 each act as charge relay system in the active site. The MCR (magnetochrome) 1 signature appears at 375–398 (IFAGTRAPHTDGRQNMDCTTCHDL). Heme contacts are provided by Cys-392, Cys-395, His-396, Cys-438, Cys-441, and His-442. The short motif at 421–444 (IPMGAVSPHTDGRQNMNCANCHQM) is the MCR 2 element. PDZ domains follow at residues 471–573 (AINI…LRDG) and 622–721 (PAVM…NRNG).

The protein in the N-terminal section; belongs to the peptidase S1C family. Might interact with MamB via PDZ1. Heme serves as cofactor. Post-translationally, subject to autocatalytic cleavage; cleavage also requires MamO.

It localises to the magnetosome membrane. Autoproteolysis is stimulated by exogenous substrates or peptides that bind to its PDZ domains; may be stimulated by an environmental cue in vivo. Protease activity is tightly regulated; increasing its activity decreases substrate levels and disturbs biomineralization. In terms of biological role, acts at 2 distinct steps of magnetosome formation; required for correct localization of proteins to the magnetosome while the protease activity is required for maturation of small magnetite crystals into larger, functional ones. The 2 functions are separable by mutation. Probably cleaves at least itself, MamO and MamP; cleavage requires the putative transport domain of MamO. Involved in localization of some proteins (at least MamA, MamC, MamF, MamI and MamJ) to the magnetosome. This is Magnetosome formation protease MamE (mamE) from Paramagnetospirillum magneticum (strain ATCC 700264 / AMB-1) (Magnetospirillum magneticum).